We begin with the raw amino-acid sequence, 1218 residues long: DNA polymerase subunit gamma-1 (1218 aa).

Residues 31-50 form a disordered region; that stretch reads LDPVPSDGRPPSQMPSSENG. An Exo I motif is present at residues 179–183; sequence VFDVE. Residue aspartate 181 is the Exonuclease activity of the active site. Positions 250–258 match the Exo II motif; that stretch reads VGHNVSFDR. Serine 289 serves as a coordination point for DNA. Residues 378 to 386 carry the Exo III motif; it reads YCARDVWAT. Residues 484 to 524 are disordered; it reads KKVKKPASASKLPIEGAGPFGDPMDQEDPGPPSEEEELQRS. An accessory-interacting determinant region spans residues 492-553; the sequence is ASKLPIEGAG…RPQHLPGHPG (62 aa). Acidic residues predominate over residues 507–520; that stretch reads MDQEDPGPPSEEEE. An RNA-binding site is contributed by arginine 561. Serine 575 is a binding site for DNA. Histidine 733, glycine 742, and lysine 747 together coordinate RNA. DNA contacts are provided by lysine 785 and threonine 828. A trigger loop region spans residues 837–843; that stretch reads TWLTASN. The RNA site is built by serine 842 and arginine 848. Positions 866–875 match the Pol A motif; that stretch reads VGADVDSQEL. Positions 869, 870, 872, 874, 922, 926, and 930 each coordinate a 2'-deoxyribonucleoside 5'-triphosphate. Aspartate 869 and valine 870 together coordinate Mg(2+). Positions 922–937 match the Pol B motif; sequence REHAKIFNYGRIYGAG. DNA-binding residues include threonine 1073 and serine 1074. The Pol C motif lies at 1113 to 1120; that stretch reads HDEVRYLV. Aspartate 1114 serves as a coordination point for a 2'-deoxyribonucleoside 5'-triphosphate. Aspartate 1114 lines the Mg(2+) pocket.

This sequence belongs to the DNA polymerase type-A family. As to quaternary structure, heterotrimer composed of a catalytic subunit and a homodimer of accessory subunits (POLG:POLG2). Interacts with TTC3. Interacts with LIG3. It depends on Mg(2+) as a cofactor.

The protein resides in the mitochondrion. It is found in the mitochondrion matrix. The protein localises to the mitochondrion nucleoid. It carries out the reaction DNA(n) + a 2'-deoxyribonucleoside 5'-triphosphate = DNA(n+1) + diphosphate. It catalyses the reaction a 3'-end 2'-deoxyribonucleotidyl-deoxyribonucleotide-DNA + H2O = a 3'-end 2'-deoxyribonucleotide-DNA + a 2'-deoxyribonucleoside 5'-phosphate + H(+). The catalysed reaction is a 5'-end 2'-deoxyribose-2'-deoxyribonucleotide-DNA = (2E,4S)-4-hydroxypenten-2-al-5-phosphate + a 5'-end 5'-phospho-2'-deoxyribonucleoside-DNA + H(+). Inhibited by dideoxynucleotides such as antiviral agent zalcitabine. Its function is as follows. Catalytic subunit of DNA polymerase gamma solely responsible for replication of mitochondrial DNA (mtDNA). Replicates both heavy and light strands of the circular mtDNA genome using a single-stranded DNA template, RNA primers and the four deoxyribonucleoside triphosphates as substrates. Has 5' -&gt; 3' polymerase activity. Functionally interacts with TWNK and SSBP1 at the replication fork to form a highly processive replisome, where TWNK unwinds the double-stranded DNA template prior to replication and SSBP1 covers the parental heavy strand to enable continuous replication of the entire mitochondrial genome. A single nucleotide incorporation cycle includes binding of the incoming nucleotide at the insertion site, a phosphodiester bond formation reaction that extends the 3'-end of the primer DNA, and translocation of the primer terminus to the post-insertion site. After completing replication of a mtDNA strand, mediates 3' -&gt; 5' exonucleolytic degradation at the nick to enable proper ligation. Highly accurate due to high nucleotide selectivity and 3' -&gt; 5' exonucleolytic proofreading. Proficiently corrects base substitutions, single-base additions and deletions in non-repetitive sequences and short repeats, but displays lower proofreading activity when replicating longer homopolymeric stretches. Exerts exonuclease activity toward single-stranded DNA and double-stranded DNA containing 3'-terminal mispairs. When a misincorporation occurs, transitions from replication to a pro-nucleolytic editing mode and removes the missincorporated nucleoside in the exonuclease active site. Proceeds via an SN2 nucleolytic mechanism in which Asp-198 catalyzes phosphodiester bond hydrolysis and Glu-200 stabilizes the leaving group. As a result the primer strand becomes one nucleotide shorter and is positioned in the post-insertion site, ready to resume DNA synthesis. Exerts 5'-deoxyribose phosphate (dRP) lyase activity and mediates repair-associated mtDNA synthesis (gap filling) in base-excision repair pathway. Catalyzes the release of the 5'-terminal 2-deoxyribose-5-phosphate sugar moiety from incised apurinic/apyrimidinic (AP) sites to produce a substrate for DNA ligase. The dRP lyase reaction does not require divalent metal ions and likely proceeds via a Schiff base intermediate in a beta-elimination reaction mechanism. The protein is DNA polymerase subunit gamma-1 of Mus musculus (Mouse).